Consider the following 64-residue polypeptide: Large ribosomal subunit protein uL29 (64 aa).

This sequence belongs to the universal ribosomal protein uL29 family.

This chain is Large ribosomal subunit protein uL29, found in Burkholderia ambifaria (strain MC40-6).